Reading from the N-terminus, the 329-residue chain is Deoxyhypusine hydroxylase (329 aa).

HEAT-like PBS-type repeat units follow at residues 65-91 (LKHE…VLED), 99-124 (RHEA…MRDD), 232-258 (FRHE…ALSN), and 265-292 (VRHE…FLND). Fe cation contacts are provided by His67, Glu68, His100, Glu101, His234, Glu235, His267, and Glu268.

Belongs to the deoxyhypusine hydroxylase family. Requires Fe(2+) as cofactor.

It localises to the cytoplasm. The protein localises to the nucleus. The catalysed reaction is [eIF5A protein]-deoxyhypusine + AH2 + O2 = [eIF5A protein]-hypusine + A + H2O. It participates in protein modification; eIF5A hypusination. Functionally, catalyzes the hydroxylation of the N(6)-(4-aminobutyl)-L-lysine intermediate to form hypusine, an essential post-translational modification only found in mature eIF-5A factor. The polypeptide is Deoxyhypusine hydroxylase (Phaeosphaeria nodorum (strain SN15 / ATCC MYA-4574 / FGSC 10173) (Glume blotch fungus)).